We begin with the raw amino-acid sequence, 489 residues long: MESLRDMVLPPGFGFHPKDTELISHYLKKKIHGQKIEYEIIPEVDIYKHEPWDLPAKCDVPTQDNKWHFFAARDRKYPNGSRSNRATVAGYWKSTGKDRAIKMGKQTIGTKKTLVFHEGRPPTGRRTEWIMHEYYIDERECQACPDMKDAYVLCRITKRNDWIPGNGNELDNSDPHPEPYDAPPSVISTEQLNPAAEPVVGVEAAPVTVAEPDGVTTSAITANIPSPSDDINLDDWLNELFDPFFDPEQSLASADLSPDEQNVESSNVGALAPKVEQDYSSPNENVVDDTEYLLPEDVYNILHPGTDDFNMLQNPLDQYPIQYATDVWSGIQKEELWSPQANAEPSQSNEAADNGIIRRYRSMKTPETSVPQFKGKTQAKMRVGINKMATSSSESINQTIKFENSGRLVEHQKNQAHDVASTKRSDAGKPSTELSSNRGFLRGIRNAFAGCSDARWNMILVAGFAIGVAVVALHIGQRLGLSQRDQQHT.

An NAC domain is found at 9–159 (LPPGFGFHPK…AYVLCRITKR (151 aa)). The DNA-binding element occupies 108 to 165 (IGTKKTLVFHEGRPPTGRRTEWIMHEYYIDERECQACPDMKDAYVLCRITKRNDWIPG). Residues 413–427 (KNQAHDVASTKRSDA) are compositionally biased toward basic and acidic residues. The tract at residues 413 to 435 (KNQAHDVASTKRSDAGKPSTELS) is disordered. Residues 456-476 (WNMILVAGFAIGVAVVALHIG) form a helical membrane-spanning segment.

As to expression, widely expressed.

Its subcellular location is the nucleus. It is found in the cell membrane. Functionally, transcription activator involved in heat and endoplasmic reticulum (ER) stress responses. Regulates the expression of genes involved in ER protein folding and heat stress-responsive genes. Binds directly to the promoter of BZIP74 and regulates its expression in response to heat stress. The polypeptide is NAC domain-containing protein 74 (Oryza sativa subsp. japonica (Rice)).